Reading from the N-terminus, the 129-residue chain is Small ribosomal subunit protein uS11 (129 aa).

This sequence belongs to the universal ribosomal protein uS11 family. Part of the 30S ribosomal subunit. Interacts with proteins S7 and S18. Binds to IF-3.

Located on the platform of the 30S subunit, it bridges several disparate RNA helices of the 16S rRNA. Forms part of the Shine-Dalgarno cleft in the 70S ribosome. The polypeptide is Small ribosomal subunit protein uS11 (Pseudomonas putida (strain GB-1)).